Reading from the N-terminus, the 428-residue chain is MTELPRLPAQGGCSNAPILKQRGQREVFCGLTGIIWLHRKMQDAFFLVVGSRTCAHLLQSAAGVMIFAEPRFGTAILEETDLAGLADAQAELDKVVDQLLARRTDIKQLFLVGSCPSEVIKLDLSRAAERMTEKYAPSVRVLNFSGSGIETTFTQGEDACLASMVPVLPKTDTRQLLLVGALPDVVEEQAVSLLEQMGIGPIKVLPAPRADTDLGIGENTVFALTQPFLGDTHGALERRGARHLPAPFPFGEEGTTAWLRVIADEFGVDADTFERVTAAPRARARKAISQASEALRGKTIFFFPDSQLEIPLARFLTRECGMEAIEVGSPFVHKGIIGSDLEMLAQGPVISEGQDVDLQLDRCRAARPDLTVCGLGLANPLEAEGLATKWAIELVFTPVHFYEQAGDLAGLFSRPVRRAGLLKVEAAE.

[4Fe-4S] cluster-binding residues include cysteine 29, cysteine 54, and cysteine 115.

The protein belongs to the BchN/ChlN family. Protochlorophyllide reductase is composed of three subunits; BchL, BchN and BchB. Forms a heterotetramer of two BchB and two BchN subunits. The cofactor is [4Fe-4S] cluster.

The catalysed reaction is chlorophyllide a + oxidized 2[4Fe-4S]-[ferredoxin] + 2 ADP + 2 phosphate = protochlorophyllide a + reduced 2[4Fe-4S]-[ferredoxin] + 2 ATP + 2 H2O. It participates in porphyrin-containing compound metabolism; bacteriochlorophyll biosynthesis (light-independent). Component of the dark-operative protochlorophyllide reductase (DPOR) that uses Mg-ATP and reduced ferredoxin to reduce ring D of protochlorophyllide (Pchlide) to form chlorophyllide a (Chlide). This reaction is light-independent. The NB-protein (BchN-BchB) is the catalytic component of the complex. In Roseobacter denitrificans (strain ATCC 33942 / OCh 114) (Erythrobacter sp. (strain OCh 114)), this protein is Light-independent protochlorophyllide reductase subunit N.